The primary structure comprises 120 residues: Cytochrome c2 iso-1 (120 aa).

Gln-1 bears the Pyrrolidone carboxylic acid mark. Heme c is bound by residues Cys-15, Cys-18, His-19, and Met-98.

The protein belongs to the cytochrome c family. In terms of processing, binds 1 heme c group covalently per subunit.

Its function is as follows. Cytochrome c2 is found mainly in purple, non-sulfur, photosynthetic bacteria where it functions as the electron donor to the oxidized bacteriochlorophyll in the photophosphorylation pathway. However, it may also have a role in the respiratory chain and is found in some non-photosynthetic bacteria. The protein is Cytochrome c2 iso-1 of Rhodospirillum centenum (Rhodocista centenaria).